Consider the following 955-residue polypeptide: 2-oxoglutarate dehydrogenase E1 component (955 aa).

The protein belongs to the alpha-ketoglutarate dehydrogenase family. As to quaternary structure, homodimer. Part of the 2-oxoglutarate dehydrogenase (OGDH) complex composed of E1 (2-oxoglutarate dehydrogenase), E2 (dihydrolipoamide succinyltransferase) and E3 (dihydrolipoamide dehydrogenase); the complex contains multiple copies of the three enzymatic components (E1, E2 and E3). Thiamine diphosphate is required as a cofactor.

The catalysed reaction is N(6)-[(R)-lipoyl]-L-lysyl-[protein] + 2-oxoglutarate + H(+) = N(6)-[(R)-S(8)-succinyldihydrolipoyl]-L-lysyl-[protein] + CO2. E1 component of the 2-oxoglutarate dehydrogenase (OGDH) complex which catalyzes the decarboxylation of 2-oxoglutarate, the first step in the conversion of 2-oxoglutarate to succinyl-CoA and CO(2). This chain is 2-oxoglutarate dehydrogenase E1 component, found in Bacillus mycoides (strain KBAB4) (Bacillus weihenstephanensis).